Here is a 188-residue protein sequence, read N- to C-terminus: Dual specificity protein phosphatase 18 (188 aa).

One can recognise a Tyrosine-protein phosphatase domain in the interval glycine 19 to glycine 160. The tract at residues methionine 95–isoleucine 141 is sufficient for mitochondrial localization. Catalysis depends on cysteine 104, which acts as the Phosphocysteine intermediate.

This sequence belongs to the protein-tyrosine phosphatase family. Non-receptor class dual specificity subfamily.

It is found in the cytoplasm. It localises to the nucleus. The protein resides in the mitochondrion inner membrane. It catalyses the reaction O-phospho-L-tyrosyl-[protein] + H2O = L-tyrosyl-[protein] + phosphate. The enzyme catalyses O-phospho-L-seryl-[protein] + H2O = L-seryl-[protein] + phosphate. It carries out the reaction O-phospho-L-threonyl-[protein] + H2O = L-threonyl-[protein] + phosphate. In terms of biological role, can dephosphorylate single and diphosphorylated synthetic MAPK peptides, with preference for the phosphotyrosine and diphosphorylated forms over phosphothreonine. In vitro, dephosphorylates p-nitrophenyl phosphate (pNPP). The polypeptide is Dual specificity protein phosphatase 18 (DUSP18) (Pongo abelii (Sumatran orangutan)).